The chain runs to 479 residues: Ribosomal RNA small subunit methyltransferase F (479 aa).

S-adenosyl-L-methionine contacts are provided by residues 125-131, glutamate 149, aspartate 176, and aspartate 194; that span reads AAAPGSK. Residue cysteine 247 is the Nucleophile of the active site.

The protein belongs to the class I-like SAM-binding methyltransferase superfamily. RsmB/NOP family.

It is found in the cytoplasm. The catalysed reaction is cytidine(1407) in 16S rRNA + S-adenosyl-L-methionine = 5-methylcytidine(1407) in 16S rRNA + S-adenosyl-L-homocysteine + H(+). Specifically methylates the cytosine at position 1407 (m5C1407) of 16S rRNA. This is Ribosomal RNA small subunit methyltransferase F from Shigella boydii serotype 18 (strain CDC 3083-94 / BS512).